The sequence spans 1535 residues: Lysine-specific demethylase 5D (1535 aa).

The 42-residue stretch at 14-55 (CPVFEPSWAEFQDPLGYIAKIRPIAEKSGICKIRPPADWQPP) folds into the JmjN domain. Residues 79-169 (TRVKLNYLDQ…IIYPYEMFQS (91 aa)) form the ARID domain. Positions 192 to 227 (PHSIPLRQSVQPSKFSSYSRRAKRLQPDPEPTEEDI) are disordered. Residues 197–210 (LRQSVQPSKFSSYS) show a composition bias toward polar residues. Residues lysine 205, lysine 229, lysine 244, and lysine 272 each participate in a glycyl lysine isopeptide (Lys-Gly) (interchain with G-Cter in SUMO2) cross-link. Phosphoserine is present on residues serine 291 and serine 307. Residues 314–364 (SYICQVCSRGDEDDKLLFCDGCDDNYHIFCLLPPLPEIPRGIWRCPKCILA) form a PHD-type 1 zinc finger. Residue tyrosine 430 participates in 2-oxoglutarate binding. In terms of domain architecture, JmjC spans 458–624 (EYATSGWNLN…AGRQCIEHYR (167 aa)). Fe cation is bound by residues histidine 504 and glutamate 506. Positions 512, 514, and 522 each coordinate 2-oxoglutarate. Histidine 592 contributes to the Fe cation binding site. A C5HC2 zinc finger spans residues 697–749 (CIKCKTTCFLSALACYDCPDGLVCLSHINDLCKCSSSRQYLRYRYTLDELPTM). Serine 884 carries the post-translational modification Phosphoserine. The segment at 1174–1235 (ICVCGQVPAG…DTKFLCPLCM (62 aa)) adopts a PHD-type 2 zinc-finger fold. The residue at position 1342 (serine 1342) is a Phosphoserine. The segment at 1425–1519 (HQGSRTRSRA…KDSGSSAACP (95 aa)) is disordered. Residues 1428-1441 (SRTRSRALERRRRQ) are compositionally biased toward basic residues. The segment covering 1473 to 1487 (GREEEHYQEKADREN) has biased composition (basic and acidic residues). Positions 1490–1517 (LTPSTDHSPSLKGNQNSLQHKDSGSSAA) are enriched in polar residues.

This sequence belongs to the JARID1 histone demethylase family. In terms of assembly, interacts withPCGF6, MSH5, ZMYND8, AR. The cofactor is L-ascorbate. Fe(2+) serves as cofactor.

It is found in the nucleus. The enzyme catalyses N(6),N(6),N(6)-trimethyl-L-lysyl(4)-[histone H3] + 3 2-oxoglutarate + 3 O2 = L-lysyl(4)-[histone H3] + 3 formaldehyde + 3 succinate + 3 CO2. In terms of biological role, histone demethylase that specifically demethylates 'Lys-4' of histone H3, thereby playing a central role in histone code. Does not demethylate histone H3 'Lys-9', H3 'Lys-27', H3 'Lys-36', H3 'Lys-79' or H4 'Lys-20'. Demethylates trimethylated and dimethylated but not monomethylated H3 'Lys-4'. May play a role in spermatogenesis. Involved in transcriptional repression of diverse metastasis-associated genes; in this function seems to cooperate with ZMYND8. Suppresses prostate cancer cell invasion. Regulates androgen receptor (AR) transcriptional activity by demethylating H3K4me3 active transcription marks. This chain is Lysine-specific demethylase 5D (KDM5D), found in Pan troglodytes (Chimpanzee).